A 523-amino-acid chain; its full sequence is MPEMGALLLATQAMAAPGELLNLSLNASAVLPEGAVLLAMIATLLVDLAGEKVAARWVPPICYIGLGSALVLLALQWNAPLEPSFLGAFLADNLAVAFRAVIATSTLLSLLISWRYAEKSGTPVGEYAAILLAATLGAMLLCGATDLVSIFISLETLSVASYLLSGYMKRDARSSEAALKYLLVGSAAAAVFLYGASLLYGLSGSTSLEVIGVALQTSTTPIAALSLVFVLATVAFKIAAVPFHQWTPDVYEGSPTPVVAFLSVGSKAAGFALALRILVGCFGAFDDQWKLLFTVLAVLSMTLGNVVALAQTSMKRMLAYSSIGQAGFVMIGMVCGTEDGFAAMVLYMAAYLFMNLGAFACIILFSIRTGSDRISDYAGLYQKDPLITLGLSLCLLSLGGIPPMLGFFGKIYLFFAGWANHEYLLVVVGLITSVISIYYYISVIKMMVVKEPHEASDVVKNYPDVDWSLMGMQPLRVALIGCVGVTAIGGILSNPLFQWANEAVAETPLLQQAIALVGERGLG.

Helical transmembrane passes span 29 to 49, 57 to 77, 94 to 114, 132 to 152, 182 to 202, 221 to 241, 255 to 275, 291 to 311, 317 to 337, 345 to 365, 389 to 409, 424 to 444, and 477 to 497; these read AVLPEGAVLLAMIATLLVDLA, WVPPICYIGLGSALVLLALQW, LAVAFRAVIATSTLLSLLISW, LAATLGAMLLCGATDLVSIFI, LLVGSAAAAVFLYGASLLYGL, PIAALSLVFVLATVAFKIAAV, PTPVVAFLSVGSKAAGFALAL, LLFTVLAVLSMTLGNVVALAQ, MLAYSSIGQAGFVMIGMVCGT, VLYMAAYLFMNLGAFACIILF, LGLSLCLLSLGGIPPMLGFFG, LLVVVGLITSVISIYYYISVI, and VALIGCVGVTAIGGILSNPLF.

Belongs to the complex I subunit 2 family. As to quaternary structure, NDH-1 can be composed of about 15 different subunits; different subcomplexes with different compositions have been identified which probably have different functions.

It localises to the cellular thylakoid membrane. The enzyme catalyses a plastoquinone + NADH + (n+1) H(+)(in) = a plastoquinol + NAD(+) + n H(+)(out). The catalysed reaction is a plastoquinone + NADPH + (n+1) H(+)(in) = a plastoquinol + NADP(+) + n H(+)(out). Functionally, NDH-1 shuttles electrons from an unknown electron donor, via FMN and iron-sulfur (Fe-S) centers, to quinones in the respiratory and/or the photosynthetic chain. The immediate electron acceptor for the enzyme in this species is believed to be plastoquinone. Couples the redox reaction to proton translocation, and thus conserves the redox energy in a proton gradient. Cyanobacterial NDH-1 also plays a role in inorganic carbon-concentration. The polypeptide is NAD(P)H-quinone oxidoreductase subunit 2 (Synechococcus sp. (strain CC9902)).